The sequence spans 294 residues: Ribosomal RNA small subunit methyltransferase A (294 aa).

Asn-29, Val-31, Gly-56, Glu-77, Asp-107, and Asn-126 together coordinate S-adenosyl-L-methionine.

This sequence belongs to the class I-like SAM-binding methyltransferase superfamily. rRNA adenine N(6)-methyltransferase family. RsmA subfamily.

Its subcellular location is the cytoplasm. It carries out the reaction adenosine(1518)/adenosine(1519) in 16S rRNA + 4 S-adenosyl-L-methionine = N(6)-dimethyladenosine(1518)/N(6)-dimethyladenosine(1519) in 16S rRNA + 4 S-adenosyl-L-homocysteine + 4 H(+). Its function is as follows. Specifically dimethylates two adjacent adenosines (A1518 and A1519) in the loop of a conserved hairpin near the 3'-end of 16S rRNA in the 30S particle. May play a critical role in biogenesis of 30S subunits. This is Ribosomal RNA small subunit methyltransferase A from Mycobacterium sp. (strain JLS).